Reading from the N-terminus, the 577-residue chain is Proline--tRNA ligase (577 aa).

It belongs to the class-II aminoacyl-tRNA synthetase family. ProS type 1 subfamily. Homodimer.

The protein resides in the cytoplasm. The enzyme catalyses tRNA(Pro) + L-proline + ATP = L-prolyl-tRNA(Pro) + AMP + diphosphate. In terms of biological role, catalyzes the attachment of proline to tRNA(Pro) in a two-step reaction: proline is first activated by ATP to form Pro-AMP and then transferred to the acceptor end of tRNA(Pro). As ProRS can inadvertently accommodate and process non-cognate amino acids such as alanine and cysteine, to avoid such errors it has two additional distinct editing activities against alanine. One activity is designated as 'pretransfer' editing and involves the tRNA(Pro)-independent hydrolysis of activated Ala-AMP. The other activity is designated 'posttransfer' editing and involves deacylation of mischarged Ala-tRNA(Pro). The misacylated Cys-tRNA(Pro) is not edited by ProRS. The chain is Proline--tRNA ligase from Helicobacter pylori (strain Shi470).